The following is a 117-amino-acid chain: Large ribosomal subunit protein bL20 (117 aa).

This sequence belongs to the bacterial ribosomal protein bL20 family.

Its function is as follows. Binds directly to 23S ribosomal RNA and is necessary for the in vitro assembly process of the 50S ribosomal subunit. It is not involved in the protein synthesizing functions of that subunit. This chain is Large ribosomal subunit protein bL20, found in Rippkaea orientalis (strain PCC 8801 / RF-1) (Cyanothece sp. (strain PCC 8801)).